We begin with the raw amino-acid sequence, 235 residues long: Uridylate kinase (235 aa).

An ATP-binding site is contributed by 8–11 (KFSG). The interval 16–21 (GAEGYG) is involved in allosteric activation by GTP. Residue Gly50 coordinates UMP. 2 residues coordinate ATP: Gly51 and Arg55. UMP-binding positions include Asp71 and 132-139 (TGNPYFTT). The ATP site is built by Thr159, Tyr165, and Asp168.

Belongs to the UMP kinase family. In terms of assembly, homohexamer.

It localises to the cytoplasm. It carries out the reaction UMP + ATP = UDP + ADP. Its pathway is pyrimidine metabolism; CTP biosynthesis via de novo pathway; UDP from UMP (UMPK route): step 1/1. Its activity is regulated as follows. Allosterically activated by GTP. Inhibited by UTP. Functionally, catalyzes the reversible phosphorylation of UMP to UDP. This Aliarcobacter butzleri (strain RM4018) (Arcobacter butzleri) protein is Uridylate kinase.